The primary structure comprises 91 residues: Small ribosomal subunit protein uS15c (91 aa).

The protein belongs to the universal ribosomal protein uS15 family. As to quaternary structure, part of the 30S ribosomal subunit.

The protein localises to the plastid. Its subcellular location is the chloroplast. The chain is Small ribosomal subunit protein uS15c (rps15) from Adiantum capillus-veneris (Maidenhair fern).